The primary structure comprises 491 residues: Protein nucleotidyltransferase YdiU (491 aa).

ATP contacts are provided by glycine 88, glycine 90, arginine 91, lysine 111, aspartate 123, glycine 124, arginine 174, and arginine 181. Residue aspartate 250 is the Proton acceptor of the active site. Mg(2+)-binding residues include asparagine 251 and aspartate 260. Aspartate 260 contacts ATP. A compositionally biased stretch (basic and acidic residues) spans 466–484 (DDQPDRADYAEPPQPEERV). The interval 466-491 (DDQPDRADYAEPPQPEERVLQTFCGT) is disordered.

This sequence belongs to the SELO family. Mg(2+) is required as a cofactor. Requires Mn(2+) as cofactor.

The enzyme catalyses L-seryl-[protein] + ATP = 3-O-(5'-adenylyl)-L-seryl-[protein] + diphosphate. The catalysed reaction is L-threonyl-[protein] + ATP = 3-O-(5'-adenylyl)-L-threonyl-[protein] + diphosphate. It carries out the reaction L-tyrosyl-[protein] + ATP = O-(5'-adenylyl)-L-tyrosyl-[protein] + diphosphate. It catalyses the reaction L-histidyl-[protein] + UTP = N(tele)-(5'-uridylyl)-L-histidyl-[protein] + diphosphate. The enzyme catalyses L-seryl-[protein] + UTP = O-(5'-uridylyl)-L-seryl-[protein] + diphosphate. The catalysed reaction is L-tyrosyl-[protein] + UTP = O-(5'-uridylyl)-L-tyrosyl-[protein] + diphosphate. Its function is as follows. Nucleotidyltransferase involved in the post-translational modification of proteins. It can catalyze the addition of adenosine monophosphate (AMP) or uridine monophosphate (UMP) to a protein, resulting in modifications known as AMPylation and UMPylation. The chain is Protein nucleotidyltransferase YdiU from Bradyrhizobium sp. (strain ORS 278).